Reading from the N-terminus, the 375-residue chain is Peptide chain release factor 1 (375 aa).

An N5-methylglutamine modification is found at glutamine 237. Basic and acidic residues predominate over residues 289–299 (AAREAQERQER). The tract at residues 289 to 326 (AAREAQERQERASQVGSGDRSEKIRTYNYPQNRVTDHR) is disordered.

It belongs to the prokaryotic/mitochondrial release factor family. Post-translationally, methylated by PrmC. Methylation increases the termination efficiency of RF1.

The protein localises to the cytoplasm. Peptide chain release factor 1 directs the termination of translation in response to the peptide chain termination codons UAG and UAA. This Deinococcus radiodurans (strain ATCC 13939 / DSM 20539 / JCM 16871 / CCUG 27074 / LMG 4051 / NBRC 15346 / NCIMB 9279 / VKM B-1422 / R1) protein is Peptide chain release factor 1 (prfA).